A 456-amino-acid chain; its full sequence is Bifunctional protein GlmU (456 aa).

The interval 1-229 (MLNSAMSVVI…ISETDGVNNR (229 aa)) is pyrophosphorylase. Residues 11 to 14 (LAAG), Lys25, Gln76, 81 to 82 (GT), 103 to 105 (YGD), Gly140, Glu154, Asn169, and Asn227 each bind UDP-N-acetyl-alpha-D-glucosamine. Asp105 serves as a coordination point for Mg(2+). Asn227 serves as a coordination point for Mg(2+). The segment at 230 to 250 (LQLSRLERIYQAEQAEKLLLS) is linker. The segment at 251 to 456 (GVMLRDPARF…QGWQRPVKKK (206 aa)) is N-acetyltransferase. Residues Arg333 and Lys351 each contribute to the UDP-N-acetyl-alpha-D-glucosamine site. The active-site Proton acceptor is His363. UDP-N-acetyl-alpha-D-glucosamine-binding residues include Tyr366 and Asn377. Acetyl-CoA-binding positions include Ala380, 386–387 (NY), Ser405, Ala423, and Arg440.

This sequence in the N-terminal section; belongs to the N-acetylglucosamine-1-phosphate uridyltransferase family. It in the C-terminal section; belongs to the transferase hexapeptide repeat family. In terms of assembly, homotrimer. It depends on Mg(2+) as a cofactor.

The protein localises to the cytoplasm. It carries out the reaction alpha-D-glucosamine 1-phosphate + acetyl-CoA = N-acetyl-alpha-D-glucosamine 1-phosphate + CoA + H(+). The catalysed reaction is N-acetyl-alpha-D-glucosamine 1-phosphate + UTP + H(+) = UDP-N-acetyl-alpha-D-glucosamine + diphosphate. It participates in nucleotide-sugar biosynthesis; UDP-N-acetyl-alpha-D-glucosamine biosynthesis; N-acetyl-alpha-D-glucosamine 1-phosphate from alpha-D-glucosamine 6-phosphate (route II): step 2/2. Its pathway is nucleotide-sugar biosynthesis; UDP-N-acetyl-alpha-D-glucosamine biosynthesis; UDP-N-acetyl-alpha-D-glucosamine from N-acetyl-alpha-D-glucosamine 1-phosphate: step 1/1. It functions in the pathway bacterial outer membrane biogenesis; LPS lipid A biosynthesis. Its function is as follows. Catalyzes the last two sequential reactions in the de novo biosynthetic pathway for UDP-N-acetylglucosamine (UDP-GlcNAc). The C-terminal domain catalyzes the transfer of acetyl group from acetyl coenzyme A to glucosamine-1-phosphate (GlcN-1-P) to produce N-acetylglucosamine-1-phosphate (GlcNAc-1-P), which is converted into UDP-GlcNAc by the transfer of uridine 5-monophosphate (from uridine 5-triphosphate), a reaction catalyzed by the N-terminal domain. The sequence is that of Bifunctional protein GlmU from Salmonella typhi.